Consider the following 546-residue polypeptide: Glucose-6-phosphate isomerase (546 aa).

E353 serves as the catalytic Proton donor. Catalysis depends on residues H384 and K512.

This sequence belongs to the GPI family.

It is found in the cytoplasm. It carries out the reaction alpha-D-glucose 6-phosphate = beta-D-fructose 6-phosphate. It functions in the pathway carbohydrate biosynthesis; gluconeogenesis. Its pathway is carbohydrate degradation; glycolysis; D-glyceraldehyde 3-phosphate and glycerone phosphate from D-glucose: step 2/4. Its function is as follows. Catalyzes the reversible isomerization of glucose-6-phosphate to fructose-6-phosphate. This chain is Glucose-6-phosphate isomerase, found in Methylococcus capsulatus (strain ATCC 33009 / NCIMB 11132 / Bath).